Reading from the N-terminus, the 393-residue chain is Formate-dependent phosphoribosylglycinamide formyltransferase (393 aa).

N(1)-(5-phospho-beta-D-ribosyl)glycinamide is bound by residues 22–23 (EL) and Glu-82. Residues Arg-114, Lys-155, 160 to 165 (SSGKGQ), 195 to 198 (EGFV), and Glu-203 contribute to the ATP site. The 190-residue stretch at 119–308 (RLAAEELGLV…EFALHVRAIL (190 aa)) folds into the ATP-grasp domain. Mg(2+)-binding residues include Glu-267 and Glu-279. N(1)-(5-phospho-beta-D-ribosyl)glycinamide is bound by residues Asp-286, Lys-356, and 363-364 (RR).

Belongs to the PurK/PurT family. In terms of assembly, homodimer.

The catalysed reaction is N(1)-(5-phospho-beta-D-ribosyl)glycinamide + formate + ATP = N(2)-formyl-N(1)-(5-phospho-beta-D-ribosyl)glycinamide + ADP + phosphate + H(+). Its pathway is purine metabolism; IMP biosynthesis via de novo pathway; N(2)-formyl-N(1)-(5-phospho-D-ribosyl)glycinamide from N(1)-(5-phospho-D-ribosyl)glycinamide (formate route): step 1/1. Involved in the de novo purine biosynthesis. Catalyzes the transfer of formate to 5-phospho-ribosyl-glycinamide (GAR), producing 5-phospho-ribosyl-N-formylglycinamide (FGAR). Formate is provided by PurU via hydrolysis of 10-formyl-tetrahydrofolate. The chain is Formate-dependent phosphoribosylglycinamide formyltransferase from Solidesulfovibrio magneticus (strain ATCC 700980 / DSM 13731 / RS-1) (Desulfovibrio magneticus).